The chain runs to 343 residues: DNA-directed RNA polymerase subunit alpha (343 aa).

Positions 1–236 are alpha N-terminal domain (alpha-NTD); it reads MQEHYYKFWR…EQLQIFLTFD (236 aa). Residues 253–343 are alpha C-terminal domain (alpha-CTD); it reads LNENLFRSVD…QPPQKRETQQ (91 aa).

Belongs to the RNA polymerase alpha chain family. In terms of assembly, homodimer. The RNAP catalytic core consists of 2 alpha, 1 beta, 1 beta' and 1 omega subunit. When a sigma factor is associated with the core the holoenzyme is formed, which can initiate transcription.

The enzyme catalyses RNA(n) + a ribonucleoside 5'-triphosphate = RNA(n+1) + diphosphate. Functionally, DNA-dependent RNA polymerase catalyzes the transcription of DNA into RNA using the four ribonucleoside triphosphates as substrates. This Bdellovibrio bacteriovorus (strain ATCC 15356 / DSM 50701 / NCIMB 9529 / HD100) protein is DNA-directed RNA polymerase subunit alpha.